A 220-amino-acid chain; its full sequence is Orotate phosphoribosyltransferase (220 aa).

Residue lysine 26 participates in 5-phospho-alpha-D-ribose 1-diphosphate binding. Phenylalanine 34–phenylalanine 35 lines the orotate pocket. 5-phospho-alpha-D-ribose 1-diphosphate-binding positions include tyrosine 72–lysine 73, arginine 101, lysine 102, lysine 105, histidine 107, and aspartate 126–serine 134. Orotate contacts are provided by threonine 130 and arginine 158.

This sequence belongs to the purine/pyrimidine phosphoribosyltransferase family. PyrE subfamily. In terms of assembly, homodimer. The cofactor is Mg(2+).

It carries out the reaction orotidine 5'-phosphate + diphosphate = orotate + 5-phospho-alpha-D-ribose 1-diphosphate. It participates in pyrimidine metabolism; UMP biosynthesis via de novo pathway; UMP from orotate: step 1/2. In terms of biological role, catalyzes the transfer of a ribosyl phosphate group from 5-phosphoribose 1-diphosphate to orotate, leading to the formation of orotidine monophosphate (OMP). The chain is Orotate phosphoribosyltransferase from Bordetella avium (strain 197N).